Consider the following 238-residue polypeptide: Fatty acid metabolism regulator protein (238 aa).

Positions 6 to 74 (QSPAGFAEEY…HGKPTKVNNF (69 aa)) constitute an HTH gntR-type domain. Positions 34–53 (ERELSELIGVTRTTLREVLQ) form a DNA-binding region, H-T-H motif.

In terms of assembly, homodimer.

It is found in the cytoplasm. Functionally, multifunctional regulator of fatty acid metabolism. This chain is Fatty acid metabolism regulator protein, found in Erwinia tasmaniensis (strain DSM 17950 / CFBP 7177 / CIP 109463 / NCPPB 4357 / Et1/99).